We begin with the raw amino-acid sequence, 435 residues long: Methylenetetrahydrofolate--tRNA-(uracil-5-)-methyltransferase TrmFO (435 aa).

9 to 14 (GAGLAG) contributes to the FAD binding site.

It belongs to the MnmG family. TrmFO subfamily. Requires FAD as cofactor.

Its subcellular location is the cytoplasm. It catalyses the reaction uridine(54) in tRNA + (6R)-5,10-methylene-5,6,7,8-tetrahydrofolate + NADH + H(+) = 5-methyluridine(54) in tRNA + (6S)-5,6,7,8-tetrahydrofolate + NAD(+). It carries out the reaction uridine(54) in tRNA + (6R)-5,10-methylene-5,6,7,8-tetrahydrofolate + NADPH + H(+) = 5-methyluridine(54) in tRNA + (6S)-5,6,7,8-tetrahydrofolate + NADP(+). Its function is as follows. Catalyzes the folate-dependent formation of 5-methyl-uridine at position 54 (M-5-U54) in all tRNAs. The polypeptide is Methylenetetrahydrofolate--tRNA-(uracil-5-)-methyltransferase TrmFO (Enterococcus faecalis (strain ATCC 700802 / V583)).